We begin with the raw amino-acid sequence, 234 residues long: uncharacterized protein (234 aa).

Residues 62 to 99 form a disordered region; the sequence is NEESISDLNSDNPGNSEPSDVESFVLSDEDENSEKDFS. The span at 67-79 shows a compositional bias: polar residues; it reads SDLNSDNPGNSEP.

This is an uncharacterized protein from Acanthamoeba polyphaga (Amoeba).